A 144-amino-acid chain; its full sequence is Maximins 9/H3 (144 aa).

The signal sequence occupies residues 1–18 (MNFKYIVAVSFLIASAYA). Residues 19 to 43 (RSVKNDEQSLSQRDVLEEESLREIR) constitute a propeptide that is removed on maturation. At Y70 the chain carries Tyrosine amide. Positions 74–123 (TAEEHEVMKRLEAIMRDLDSLDHPEEASERETRGFNQDEIANLFTKKEKR) are excised as a propeptide. Isoleucine amide is present on I143.

The protein belongs to the bombinin family. Expressed by the skin glands.

The protein localises to the secreted. Its function is as follows. Maximin-9 shows antimicrobial activity against bacteria and against the fungus C.albicans. It has little hemolytic activity. Maximin-H3 shows antibacterial activity against both Gram-positive and Gram-negative bacteria. It also shows antimicrobial activity against the fungus C.albicans. Shows strong hemolytic activity. The sequence is that of Maximins 9/H3 from Bombina maxima (Giant fire-bellied toad).